The chain runs to 88 residues: Small ribosomal subunit protein uS17 (88 aa).

It belongs to the universal ribosomal protein uS17 family. In terms of assembly, part of the 30S ribosomal subunit.

Functionally, one of the primary rRNA binding proteins, it binds specifically to the 5'-end of 16S ribosomal RNA. The protein is Small ribosomal subunit protein uS17 of Synechococcus sp. (strain CC9311).